Reading from the N-terminus, the 299-residue chain is ATP phosphoribosyltransferase (299 aa).

This sequence belongs to the ATP phosphoribosyltransferase family. Long subfamily. As to quaternary structure, equilibrium between an active dimeric form, an inactive hexameric form and higher aggregates. Interconversion between the various forms is largely reversible and is influenced by the natural substrates and inhibitors of the enzyme. The cofactor is Mg(2+).

It is found in the cytoplasm. The enzyme catalyses 1-(5-phospho-beta-D-ribosyl)-ATP + diphosphate = 5-phospho-alpha-D-ribose 1-diphosphate + ATP. Its pathway is amino-acid biosynthesis; L-histidine biosynthesis; L-histidine from 5-phospho-alpha-D-ribose 1-diphosphate: step 1/9. Its activity is regulated as follows. Feedback inhibited by histidine. Its function is as follows. Catalyzes the condensation of ATP and 5-phosphoribose 1-diphosphate to form N'-(5'-phosphoribosyl)-ATP (PR-ATP). Has a crucial role in the pathway because the rate of histidine biosynthesis seems to be controlled primarily by regulation of HisG enzymatic activity. The chain is ATP phosphoribosyltransferase from Blochmanniella floridana.